The sequence spans 584 residues: DNA ligase (584 aa).

Glutamate 249 provides a ligand contact to ATP. Catalysis depends on lysine 251, which acts as the N6-AMP-lysine intermediate. Arginine 256, arginine 271, glutamate 301, phenylalanine 341, arginine 416, and lysine 422 together coordinate ATP.

The protein belongs to the ATP-dependent DNA ligase family. Mg(2+) serves as cofactor.

The enzyme catalyses ATP + (deoxyribonucleotide)n-3'-hydroxyl + 5'-phospho-(deoxyribonucleotide)m = (deoxyribonucleotide)n+m + AMP + diphosphate.. Its function is as follows. DNA ligase that seals nicks in double-stranded DNA during DNA replication, DNA recombination and DNA repair. This Pyrobaculum arsenaticum (strain DSM 13514 / JCM 11321 / PZ6) protein is DNA ligase.